The following is a 630-amino-acid chain: uncharacterized protein (630 aa).

4 helical membrane passes run 254-274 (MFYA…ELRV), 504-524 (IALL…LTSI), 564-584 (MIFA…SMVF), and 601-621 (IIVI…AVLF).

The protein resides in the cell membrane. This is an uncharacterized protein from Mycoplasma genitalium (strain ATCC 33530 / DSM 19775 / NCTC 10195 / G37) (Mycoplasmoides genitalium).